A 376-amino-acid chain; its full sequence is F-box/kelch-repeat protein At1g67480 (376 aa).

The 49-residue stretch at 37 to 85 (DPLIPGLPDDVAKQCLALVPRARFPSMGSVCKKWRFVVQSKEFITVRRL) folds into the F-box domain. 4 Kelch repeats span residues 139–189 (KLLV…EVNG), 190–237 (HVYV…AFNG), 239–289 (LYVM…LFCI), and 291–335 (WKNH…LLFS).

The sequence is that of F-box/kelch-repeat protein At1g67480 from Arabidopsis thaliana (Mouse-ear cress).